Here is a 143-residue protein sequence, read N- to C-terminus: Mannitol-specific phosphotransferase enzyme IIA component (143 aa).

The 141-residue stretch at 2–142 (QVLAKENIKL…EDLIAIFNEV (141 aa)) folds into the PTS EIIA type-2 domain. The active-site Tele-phosphohistidine intermediate is the His62. A Phosphohistidine; by HPr modification is found at His62. Ser74 is subject to Phosphoserine.

Its subcellular location is the cytoplasm. Its function is as follows. The phosphoenolpyruvate-dependent sugar phosphotransferase system (sugar PTS), a major carbohydrate active transport system, catalyzes the phosphorylation of incoming sugar substrates concomitantly with their translocation across the cell membrane. The enzyme II CmtAB PTS system is involved in D-mannitol transport. In Bacillus subtilis (strain 168), this protein is Mannitol-specific phosphotransferase enzyme IIA component (mtlF).